Consider the following 352-residue polypeptide: MTQISERLLVQAHLDAKQSNPLTPEQEADYRAAIAAELKRQNAVLVAHYYCDPVIQALAEETGGCVSDSLEMARFGKNHSAETVVVAGVRFMGETAKILTPEKRVLMPTLEATCSLDLGCPVEAFSAFCDQHPERTVVVYANTSAAVKARADWVVTSSCALEIVESLMDNGETIIWGPDQHLGRYIQKQTGADMLLWDGACIVHEEFKSRQLADMKALYPDAAILVHPESPEAVIDLADAVGSTSQLIKAAQTLPNKTFIVATDRGIFYKMQQLCPDKEFVEAPTAGNGAACRSCAHCPWMAMNTLERVLDCLRQGSNEIFVEPALIPKAIKPLNRMLDFTQAARLKVSGNA.

Iminosuccinate is bound by residues histidine 48 and serine 69. Cysteine 114 is a binding site for [4Fe-4S] cluster. Residues 140–142 and serine 157 each bind iminosuccinate; that span reads YAN. Position 201 (cysteine 201) interacts with [4Fe-4S] cluster. Iminosuccinate contacts are provided by residues 227 to 229 and threonine 244; that span reads HPE. Cysteine 298 is a [4Fe-4S] cluster binding site.

It belongs to the quinolinate synthase family. Type 1 subfamily. [4Fe-4S] cluster serves as cofactor.

The protein resides in the cytoplasm. The enzyme catalyses iminosuccinate + dihydroxyacetone phosphate = quinolinate + phosphate + 2 H2O + H(+). It participates in cofactor biosynthesis; NAD(+) biosynthesis; quinolinate from iminoaspartate: step 1/1. In terms of biological role, catalyzes the condensation of iminoaspartate with dihydroxyacetone phosphate to form quinolinate. The sequence is that of Quinolinate synthase from Pseudomonas entomophila (strain L48).